A 356-amino-acid chain; its full sequence is Transcription factor MafB (356 aa).

Disordered stretches follow at residues 49–79 and 140–240; these read RLQPQGSVSSTPISTPCSSVPSSPSFSPTEQ and YRGA…LNVE. The span at 55 to 77 shows a compositional bias: low complexity; it reads SVSSTPISTPCSSVPSSPSFSPT. Basic residues-rich tracts occupy residues 183 to 196 and 212 to 223; these read AHGHHPHHHHHHHH and HHRHHHHHHPHG. The interval 270-295 is basic motif; sequence RLKQKRRTLKNRGYAQSCRFKRVQQK. The bZIP domain maps to 270–333; it reads RLKQKRRTLK…DAYKLKCEKL (64 aa). The leucine-zipper stretch occupies residues 298–319; the sequence is LENEKTQLINQVEQLKQEINRL.

It belongs to the bZIP family. Maf subfamily. Homodimer or heterodimer with other bHLH-Zip transcription factors. Binds DNA as a homodimer or a heterodimer.

It is found in the nucleus. May act as a transcriptional activator or repressor. Involved in neurogenesis. Involved in the development of rhombomeres (r) 5 and 6 segments from their common precursor 'proto-segment' in the hindbrain. This Danio rerio (Zebrafish) protein is Transcription factor MafB (mafb).